A 458-amino-acid chain; its full sequence is 5-hydroxytryptamine receptor 2C (458 aa).

An N-terminal signal peptide occupies residues 1 to 32 (MVNLRNAVHSFLVHLIGLLVWQCDISVSPVAA). At 33–55 (IVTDIFNTSDGGRFKFPDGVQNW) the chain is on the extracellular side. The chain crosses the membrane as a helical span at residues 56–80 (PALSIVVIIIMTIGGNILVIMAVSM). Topologically, residues 81–86 (EKKLHN) are cytoplasmic. The chain crosses the membrane as a helical span at residues 87–111 (ATNYFLMSLAIADMLVGLLVMPLSL). At 112–128 (LAILYDYVWPLPRYLCP) the chain is on the extracellular side. Cys-127 and Cys-207 are joined by a disulfide. A helical membrane pass occupies residues 129-151 (VWISLDVLFSTASIMHLCAISLD). Position 139 (Thr-139) interacts with ergotamine. The short motif at 151-153 (DRY) is the DRY motif; important for ligand-induced conformation changes element. The Cytoplasmic portion of the chain corresponds to 152-167 (RYVAIRNPIEHSRFNS). Residues 168-189 (RTKAIMKIAIVWAISIGVSVPI) form a helical membrane-spanning segment. Topologically, residues 190 to 213 (PVIGLRDERKVFVNNTTCVLNDPN) are extracellular. An ergotamine-binding site is contributed by Leu-209. The chain crosses the membrane as a helical span at residues 214-236 (FVLIGSFVAFFIPLTIMVITYCL). At 237-311 (TIYVLRRQAL…AINNERKASK (75 aa)) the chain is on the cytoplasmic side. The interval 274 to 301 (EENSANPNQDQNARRRKKKERRPRGTMQ) is disordered. Residues 287–297 (RRRKKKERRPR) show a composition bias toward basic residues. Residues 312–336 (VLGIVFFVFLIMWCPFFITNILSVL) traverse the membrane as a helical segment. Cys-337 and Cys-341 are disulfide-bonded. Over 337–347 (CEKSCNQKLME) the chain is Extracellular. A helical membrane pass occupies residues 348-370 (KLLNVFVWIGYVCSGINPLVYTL). An NPxxY motif; important for ligand-induced conformation changes and signaling motif is present at residues 364–368 (NPLVY). Over 371 to 458 (FNKIYRRAFS…SVVSERISSV (88 aa)) the chain is Cytoplasmic. The short motif at 456-458 (SSV) is the PDZ-binding element.

It belongs to the G-protein coupled receptor 1 family. In terms of assembly, interacts with MPDZ. Interacts with ARRB2. Interacts with MPP3; this interaction stabilizes the receptor at the plasma membrane and prevents the desensitization of the HTR2C receptor-mediated calcium response.

It is found in the cell membrane. In terms of biological role, G-protein coupled receptor for 5-hydroxytryptamine (serotonin). Also functions as a receptor for various drugs and psychoactive substances, including ergot alkaloid derivatives, 1-2,5,-dimethoxy-4-iodophenyl-2-aminopropane (DOI) and lysergic acid diethylamide (LSD). Ligand binding causes a conformation change that triggers signaling via guanine nucleotide-binding proteins (G proteins) and modulates the activity of downstream effectors. HTR2C is coupled to G(q)/G(11) G alpha proteins and activates phospholipase C-beta, releasing diacylglycerol (DAG) and inositol 1,4,5-trisphosphate (IP3) second messengers that modulate the activity of phosphatidylinositol 3-kinase and promote the release of Ca(2+) ions from intracellular stores, respectively. Beta-arrestin family members inhibit signaling via G proteins and mediate activation of alternative signaling pathways. Regulates neuronal activity via the activation of short transient receptor potential calcium channels in the brain, and thereby modulates the activation of pro-opiomelanocortin neurons and the release of CRH that then regulates the release of corticosterone. Plays a role in the regulation of appetite and eating behavior, responses to anxiogenic stimuli and stress. Plays a role in insulin sensitivity and glucose homeostasis. This chain is 5-hydroxytryptamine receptor 2C, found in Pan troglodytes (Chimpanzee).